A 374-amino-acid chain; its full sequence is N5-carboxyaminoimidazole ribonucleotide synthase (374 aa).

ATP contacts are provided by residues R108, K148, 153 to 159 (GYDGKGQ), 183 to 186 (EKYL), E191, H214, and 266 to 267 (NE). In terms of domain architecture, ATP-grasp spans 112–296 (KETLKSAGTK…QFDTHILAVT (185 aa)).

The protein belongs to the PurK/PurT family. In terms of assembly, homodimer.

It catalyses the reaction 5-amino-1-(5-phospho-beta-D-ribosyl)imidazole + hydrogencarbonate + ATP = 5-carboxyamino-1-(5-phospho-D-ribosyl)imidazole + ADP + phosphate + 2 H(+). It functions in the pathway purine metabolism; IMP biosynthesis via de novo pathway; 5-amino-1-(5-phospho-D-ribosyl)imidazole-4-carboxylate from 5-amino-1-(5-phospho-D-ribosyl)imidazole (N5-CAIR route): step 1/2. Functionally, catalyzes the ATP-dependent conversion of 5-aminoimidazole ribonucleotide (AIR) and HCO(3)(-) to N5-carboxyaminoimidazole ribonucleotide (N5-CAIR). This chain is N5-carboxyaminoimidazole ribonucleotide synthase, found in Staphylococcus aureus (strain MRSA252).